A 265-amino-acid chain; its full sequence is Energy-coupling factor transporter transmembrane protein EcfT (265 aa).

6 consecutive transmembrane segments (helical) span residues 26–46 (MVFVFIMMILIFLMNNWQTYA), 47–67 (VGIILIFIILKASNLSFMFLF), 72–92 (PILFLLIFTLLMHIFLTKGGA), 107–127 (VIMGIMISLRFILIIFLTTIM), 152–172 (LPVHELALMMSIALRFIPTLM), and 243–263 (HTYDTLSLLTLIPITLLILYL).

It belongs to the energy-coupling factor EcfT family. As to quaternary structure, forms a stable energy-coupling factor (ECF) transporter complex composed of 2 membrane-embedded substrate-binding proteins (S component), 2 ATP-binding proteins (A component) and 2 transmembrane proteins (T component). May be able to interact with more than 1 S component at a time.

It localises to the cell membrane. Transmembrane (T) component of an energy-coupling factor (ECF) ABC-transporter complex. Unlike classic ABC transporters this ECF transporter provides the energy necessary to transport a number of different substrates. This Macrococcus caseolyticus (strain JCSC5402) (Macrococcoides caseolyticum) protein is Energy-coupling factor transporter transmembrane protein EcfT.